Reading from the N-terminus, the 202-residue chain is UPF0126 membrane protein YvgT (202 aa).

Helical transmembrane passes span 3 to 23 (WELL…IVAM), 26 to 46 (EYDI…GGAI), 63 to 83 (AYFQ…KLLL), 90 to 110 (GNLS…LYAV), 113 to 133 (GHPL…GGII), and 160 to 180 (IVGL…FVLV).

It belongs to the UPF0126 family.

It is found in the cell membrane. In Bacillus subtilis (strain 168), this protein is UPF0126 membrane protein YvgT (yvgT).